Consider the following 114-residue polypeptide: Beta-microseminoprotein (114 aa).

A signal peptide spans 1–20 (MNVLLGGFVIFATFVTLCNA). 5 disulfides stabilise this stretch: Cys22–Cys70, Cys38–Cys62, Cys57–Cys93, Cys60–Cys69, and Cys84–Cys107.

It belongs to the beta-microseminoprotein family. In terms of assembly, homodimer; Interacts with PI16.

The protein localises to the secreted. In Macaca mulatta (Rhesus macaque), this protein is Beta-microseminoprotein (MSMB).